A 459-amino-acid chain; its full sequence is Pentatricopeptide repeat-containing protein At1g07740, mitochondrial (459 aa).

The N-terminal 20 residues, 1–20, are a transit peptide targeting the mitochondrion; sequence MRRRLSSVLINNQCIASQRH. A disordered region spans residues 19–41; that stretch reads RHYHTSRPEKPTKKASSHEPTHK. Residues 24 to 41 show a composition bias toward basic and acidic residues; that stretch reads SRPEKPTKKASSHEPTHK. PPR repeat units lie at residues 80-114, 115-149, 150-184, 185-219, 220-254, 255-289, 290-324, 325-359, 360-394, and 395-429; these read DYPSYSSLIYKLAKSRNFDAVDQILRLVRYRNVRC, RESLFMGLIQHYGKAGSVDKAIDVFHKITSFDCVR, TIQSLNTLINVLVDNGELEKAKSFFDGAKDMRLRP, NSVSFNILIKGFLDKCDWEAACKVFDEMLEMEVQP, SVVTYNSLIGFLCRNDDMGKAKSLLEDMIKKRIRP, NAVTFGLLMKGLCCKGEYNEAKKLMFDMEYRGCKP, GLVNYGILMSDLGKRGRIDEAKLLLGEMKKRRIKP, DVVIYNILVNHLCTECRVPEAYRVLTEMQMKGCKP, NAATYRMMIDGFCRIEDFDSGLNVLNAMLASRHCP, and TPATFVCMVAGLIKGGNLDHACFVLEVMGKKNLSF.

The protein belongs to the PPR family. P subfamily.

The protein resides in the mitochondrion. The polypeptide is Pentatricopeptide repeat-containing protein At1g07740, mitochondrial (Arabidopsis thaliana (Mouse-ear cress)).